Reading from the N-terminus, the 320-residue chain is Homoserine kinase (320 aa).

100-110 (PLSSGMGSSAA) contributes to the ATP binding site.

This sequence belongs to the GHMP kinase family. Homoserine kinase subfamily.

Its subcellular location is the cytoplasm. The catalysed reaction is L-homoserine + ATP = O-phospho-L-homoserine + ADP + H(+). It participates in amino-acid biosynthesis; L-threonine biosynthesis; L-threonine from L-aspartate: step 4/5. Functionally, catalyzes the ATP-dependent phosphorylation of L-homoserine to L-homoserine phosphate. The sequence is that of Homoserine kinase from Chlorobium phaeobacteroides (strain DSM 266 / SMG 266 / 2430).